Reading from the N-terminus, the 368-residue chain is C-glycoside deglycosidase alpha subunit (368 aa).

E145 contributes to the a divalent metal cation binding site. Residue H147 is the Proton acceptor of the active site. D177, H275, and E311 together coordinate a divalent metal cation.

It belongs to the C-glycoside deglycosidase alpha subunit family. As to quaternary structure, heterodimer composed of an alpha subunit (CarB) and a beta subunit (CarC). Requires a divalent metal cation as cofactor.

The enzyme catalyses 3''-dehydroisovitexin = 1,5-anhydro-D-erythro-hex-1-en-3-ulose + apigenin. The catalysed reaction is 3''-dehydroisoorientin = 1,5-anhydro-D-erythro-hex-1-en-3-ulose + luteolin. In terms of biological role, carbon-carbon bond-cleaving enzyme which participates in the metabolism of C-glycosides. Acts on the C6-glycosylated compounds 3''-dehydroisovitexin (3''-oxo-isovitexin) and 3''-dehydroisoorientin (3''-oxo-homoorientin). Shows weak activity with 3'-dehydromangiferin (3'-oxo-mangiferin). This is C-glycoside deglycosidase alpha subunit from Microbacterium trichothecenolyticum (Aureobacterium trichothecenolyticum).